The chain runs to 524 residues: MPQLSLSWLGLGPVAASPWLLLLLVGGSWLLARVLAWTYTFYDNCRRLQCFPQPPKQNWFWGHQGLVTPTEEGMKTLTQLVTTYPQGFKLWLGPTFPLLILCHPDIIRPITSASAAVAPKDMIFYGFLKPWLGDGLLLSGGDKWSRHRRMLTPAFHFNILKPYMKIFNKSVNIMHDKWQRLASEGSARLDMFEHISLMTLDSLQKCVFSFESNCQEKPSEYIAAILELSAFVEKRNQQILLHTDFLYYLTPDGQRFRRACHLVHDFTDAVIQERRCTLPTQGIDDFLKNKAKSKTLDFIDVLLLSKDEDGKELSDEDIRAEADTFMFEGHDTTASGLSWVLYHLAKHPEYQEQCRQEVQELLKDREPIEIEWDDLAQLPFLTMCIKESLRLHPPVPVISRCCTQDFVLPDGRVIPKGIVCLINIIGIHYNPTVWPDPEVYDPFRFDQENIKERSPLAFIPFSAGPRNCIGQAFAMAEMKVVLALTLLHFRILPTHTEPRRKPELILRAEGGLWLRVEPLGANSQ.

A helical transmembrane segment spans residues 15 to 37; the sequence is AASPWLLLLLVGGSWLLARVLAW. 4-hydroxynonenal-conjugated cysteine occurs at positions 45 and 260. A 4-hydroxynonenal-conjugated histidine modification is found at His261. Glu328 is a heme binding site. His347 is modified (4-hydroxynonenal-conjugated histidine). At Cys354 the chain carries 4-hydroxynonenal-conjugated cysteine. 4-hydroxynonenal-conjugated lysine is present on Lys451. A heme-binding site is contributed by Cys468.

This sequence belongs to the cytochrome P450 family. Requires heme as cofactor. 4-hydroxynonenal conjugation impairs substrate binding and the long-chain fatty acid omega-monooxygenase activity. As to expression, expressed mainly in human liver, followed by kidney, heart, and skeletal muscle.

The protein resides in the endoplasmic reticulum membrane. Its subcellular location is the microsome membrane. It carries out the reaction an organic molecule + reduced [NADPH--hemoprotein reductase] + O2 = an alcohol + oxidized [NADPH--hemoprotein reductase] + H2O + H(+). The catalysed reaction is an omega-methyl-long-chain fatty acid + reduced [NADPH--hemoprotein reductase] + O2 = an omega-hydroxy-long-chain fatty acid + oxidized [NADPH--hemoprotein reductase] + H2O + H(+). The enzyme catalyses dodecanoate + reduced [NADPH--hemoprotein reductase] + O2 = 12-hydroxydodecanoate + oxidized [NADPH--hemoprotein reductase] + H2O + H(+). It catalyses the reaction hexadecanoate + reduced [NADPH--hemoprotein reductase] + O2 = 16-hydroxyhexadecanoate + oxidized [NADPH--hemoprotein reductase] + H2O + H(+). It carries out the reaction (9Z)-octadecenoate + reduced [NADPH--hemoprotein reductase] + O2 = 18-hydroxy-(9Z)-octadecenoate + oxidized [NADPH--hemoprotein reductase] + H2O + H(+). The catalysed reaction is (5Z,8Z,11Z,14Z)-eicosatetraenoate + reduced [NADPH--hemoprotein reductase] + O2 = 20-hydroxy-(5Z,8Z,11Z,14Z)-eicosatetraenoate + oxidized [NADPH--hemoprotein reductase] + H2O + H(+). The enzyme catalyses (4Z,7Z,10Z,13Z,16Z,19Z)-docosahexaenoate + reduced [NADPH--hemoprotein reductase] + O2 = 22-hydroxy-(4Z,7Z,10Z,13Z,16Z,19Z)-docosahexaenoate + oxidized [NADPH--hemoprotein reductase] + H2O + H(+). It catalyses the reaction 8-hydroxy-(5Z,9E,11Z,14Z)-eicosatetraenoate + reduced [NADPH--hemoprotein reductase] + O2 = 8,20-dihydroxy-(5Z,9E,11Z,14Z)-eicosatetraenoate + oxidized [NADPH--hemoprotein reductase] + H2O + H(+). It carries out the reaction 3-hydroxyhexadecanoate + reduced [NADPH--hemoprotein reductase] + O2 = 3,16-dihydroxyhexadecanoate + oxidized [NADPH--hemoprotein reductase] + H2O + H(+). The catalysed reaction is 3-hydroxyoctadecanoate + reduced [NADPH--hemoprotein reductase] + O2 = 3,18-dihydroxyoctadecanoate + oxidized [NADPH--hemoprotein reductase] + H2O + H(+). The enzyme catalyses phylloquinone + reduced [NADPH--hemoprotein reductase] + O2 = omega-hydroxyphylloquinone + oxidized [NADPH--hemoprotein reductase] + H2O + H(+). It catalyses the reaction menaquinone-4 + reduced [NADPH--hemoprotein reductase] + O2 = omega-hydroxymenaquinone-4 + oxidized [NADPH--hemoprotein reductase] + H2O + H(+). It carries out the reaction 2-hexyl-5-pentylresorcinol + reduced [NADPH--hemoprotein reductase] + O2 = 2-hexyl-5-(5-hydroxypentyl)resorcinol + oxidized [NADPH--hemoprotein reductase] + H2O + H(+). The catalysed reaction is 2-hexyl-5-heptylresorcinol + reduced [NADPH--hemoprotein reductase] + O2 = 2-hexyl-5-(7-hydroxyheptyl)resorcinol + oxidized [NADPH--hemoprotein reductase] + H2O + H(+). The enzyme catalyses 12-hydroxy-(5Z,8Z,10E,14Z)-eicosatetraenoate + reduced [NADPH--hemoprotein reductase] + O2 = 12,20-dihydroxy-(5Z,8Z,10E,14Z)-eicosatetraenoate + oxidized [NADPH--hemoprotein reductase] + H2O + H(+). It catalyses the reaction 15-hydroxy-(5Z,8Z,11Z,13E)-eicosatetraenoate + reduced [NADPH--hemoprotein reductase] + O2 = 15,20-dihydroxy-(5Z,8Z,11Z,13E)-eicosatetraenoate + oxidized [NADPH--hemoprotein reductase] + H2O + H(+). Its pathway is lipid metabolism; arachidonate metabolism. It participates in lipid metabolism; oxylipin biosynthesis. The protein operates within cofactor degradation; phylloquinone degradation. It functions in the pathway xenobiotic degradation. With respect to regulation, inhibition of the long-chain fatty acid omega-monooxygenase activity by 4-hydroxynonenal (4-HNE) conjugation. A cytochrome P450 monooxygenase involved in the metabolism of various endogenous substrates, including fatty acids and their oxygenated derivatives (oxylipins). Mechanistically, uses molecular oxygen inserting one oxygen atom into a substrate, and reducing the second into a water molecule, with two electrons provided by NADPH via cytochrome P450 reductase (CPR; NADPH-ferrihemoprotein reductase). Catalyzes with high efficiency the oxidation of the terminal carbon (omega-oxidation) of 3-hydroxy fatty acids, such as 3-hydroxyhexadecanoic and 3-hydroxyoctadecanoic acids, likely participating in the biosynthesis of long-chain 3-hydroxydicarboxylic acids. Omega-hydroxylates and inactivates phylloquinone (vitamin K1), and menaquinone-4 (MK-4, a form of vitamin K2), both acting as cofactors in blood coagulation. Metabolizes with low efficiciency fatty acids, including (5Z,8Z,11Z,14Z)-eicosatetraenoic acid (arachidonate) and its oxygenated metabolite 8-hydroxyeicosatetraenoic acid (8-HETE). Catalyzes N- and O-demethylation of drugs such as erythromycin, benzphetamine, ethylmorphine, chlorpromazine, imipramine and verapamil. Catalyzes the oxidation of dialkylresorcinol 2. This is Cytochrome P450 4F11 from Homo sapiens (Human).